The primary structure comprises 116 residues: Large ribosomal subunit protein bL17 (116 aa).

This sequence belongs to the bacterial ribosomal protein bL17 family. As to quaternary structure, part of the 50S ribosomal subunit. Contacts protein L32.

This Synechocystis sp. (strain ATCC 27184 / PCC 6803 / Kazusa) protein is Large ribosomal subunit protein bL17.